We begin with the raw amino-acid sequence, 984 residues long: Probable translation initiation factor IF-2 (984 aa).

The DOD-type homing endonuclease domain occupies 94-215 (VNGWYSVTVT…LPLLLLRFGI (122 aa)). Residues 391–608 (TTETHNFVAN…LIAGLSQKYL (218 aa)) form the tr-type G domain. Residues 464 to 468 (DTPGH) and 518 to 521 (NKID) contribute to the GTP site.

It belongs to the TRAFAC class translation factor GTPase superfamily. Classic translation factor GTPase family. IF-2 subfamily. Post-translationally, this protein undergoes a protein self splicing that involves a post-translational excision of the intervening region (intein) followed by peptide ligation.

Function in general translation initiation by promoting the binding of the formylmethionine-tRNA to ribosomes. Seems to function along with eIF-2. This chain is Probable translation initiation factor IF-2 (infB), found in Pyrococcus furiosus (strain ATCC 43587 / DSM 3638 / JCM 8422 / Vc1).